Consider the following 338-residue polypeptide: Protein FosB (338 aa).

Disordered regions lie at residues 1–54 (MFQA…PGSF), 79–191 (MAQS…DQLE), 222–276 (CKIP…PPNL), and 316–338 (GAQR…LLAL). Polar residues-rich tracts occupy residues 13 to 31 (SRCS…SVDS) and 79 to 88 (MAQSQGQPLA). S27 bears the Phosphoserine mark. Positions 113-124 (SSGGASGSGGPS) are enriched in gly residues. Over residues 125-137 (TSGTTSGPGPARP) the composition is skewed to low complexity. A bZIP domain is found at 155–218 (EEKRRVRRER…ERLEFVLVAH (64 aa)). The interval 157 to 182 (KRRVRRERNKLAAAKCRNRRRELTDR) is basic motif. Residues 183 to 211 (LQAETDQLEEEKAELESEIAELQKEKERL) form a leucine-zipper region. Pro residues predominate over residues 256-265 (LPPPPPPPLP). Polar residues-rich tracts occupy residues 266 to 276 (FQTSQDAPPNL) and 318 to 338 (QRTS…LLAL).

Belongs to the bZIP family. Fos subfamily. As to quaternary structure, heterodimer; binds to DNA as heterodimer. Component of an AP-1 transcription factor complex; composed of FOS-JUN heterodimers. As part of the AP-1 transcription factor complex, forms heterodimers with JUN, JUNB or JUND, thereby binding to the AP-1 consensus sequence and stimulating transcription. Interacts with the BAF multiprotein chromatin-remodeling complex subunits SMARCB1 and SMARCD1. Interacts with ARID1A and JUN. Homodimer under oxidizing conditions and monomer under reducing conditions (in vitro). Heterodimer; binds to DNA as heterodimer. Forms heterodimers with JUNB, JUN or JUND; thereby binding to the AP-1 consensus sequence but does not stimulate transcription. Forms heterodimers with JUND under oxidizing conditions. In terms of processing, phosphorylated. Post-translationally, phosphorylated at Ser-27 by CSNK2A1; phosphorylation increases protein stability and transactivation potential. As to expression, expressed in the nucleus accumbens of the striatum (at protein level).

The protein localises to the nucleus. Functionally, heterodimerizes with proteins of the JUN family to form an AP-1 transcription factor complex, thereby enhancing their DNA binding activity to gene promoters containing an AP-1 consensus sequence 5'-TGA[GC]TCA-3' and enhancing their transcriptional activity. As part of the AP-1 complex, facilitates enhancer selection together with cell-type-specific transcription factors by collaboratively binding to nucleosomal enhancers and recruiting the SWI/SNF (BAF) chromatin remodeling complex to establish accessible chromatin. Together with JUN, plays a role in activation-induced cell death of T cells by binding to the AP-1 promoter site of FASLG/CD95L, and inducing its transcription in response to activation of the TCR/CD3 signaling pathway. Exhibits transactivation activity in vitro. Involved in the display of nurturing behavior towards newborns. May play a role in neurogenesis in the hippocampus and in learning and memory-related tasks by regulating the expression of various genes involved in neurogenesis, depression and epilepsy. Implicated in behavioral responses related to morphine reward and spatial memory. Exhibits lower transactivation activity than isoform 1 in vitro. The heterodimer with JUN does not display any transcriptional activity, and may thereby act as an transcriptional inhibitor. May be involved in the regulation of neurogenesis in the hippocampus. May play a role in synaptic modifications in nucleus accumbens medium spiny neurons and thereby play a role in adaptive and pathological reward-dependent learning, including maladaptive responses involved in drug addiction. Seems to be more stably expressed with a half-life of ~9.5 hours in cell culture as compared to 1.5 hours half-life of isoform 1. In Homo sapiens (Human), this protein is Protein FosB (FOSB).